Consider the following 521-residue polypeptide: Glucose-6-phosphate isomerase (521 aa).

The active-site Proton donor is Glu351. Residues His382 and Lys491 contribute to the active site.

This sequence belongs to the GPI family.

It is found in the cytoplasm. It carries out the reaction alpha-D-glucose 6-phosphate = beta-D-fructose 6-phosphate. The protein operates within carbohydrate biosynthesis; gluconeogenesis. It participates in carbohydrate degradation; glycolysis; D-glyceraldehyde 3-phosphate and glycerone phosphate from D-glucose: step 2/4. In terms of biological role, catalyzes the reversible isomerization of glucose-6-phosphate to fructose-6-phosphate. The polypeptide is Glucose-6-phosphate isomerase (Polaromonas naphthalenivorans (strain CJ2)).